We begin with the raw amino-acid sequence, 354 residues long: Ferredoxin--NADP reductase (354 aa).

Residues Asp-42, Gln-50, Tyr-55, Ile-95, Phe-130, Asp-299, and Thr-339 each coordinate FAD.

Belongs to the ferredoxin--NADP reductase type 2 family. Homodimer. Requires FAD as cofactor.

The enzyme catalyses 2 reduced [2Fe-2S]-[ferredoxin] + NADP(+) + H(+) = 2 oxidized [2Fe-2S]-[ferredoxin] + NADPH. In Acidovorax sp. (strain JS42), this protein is Ferredoxin--NADP reductase.